The primary structure comprises 336 residues: Ventral anterior homeobox 1 (336 aa).

Over residues 1 to 34 the composition is skewed to basic and acidic residues; sequence MFGKTDKMDVRCHSDTEAARVSKNAHKESREIKG. Disordered regions lie at residues 1–39 and 50–69; these read MFGKTDKMDVRCHSDTEAARVSKNAHKESREIKGAEGSL and AFSASGASEDCNKSKSNSSA. A DNA-binding region (homeobox) is located at residues 100–159; it reads PKRTRTSFTAEQLYRLEMEFQRCQYVVGRERTELARQLNLSETQVKVWFQNRRTKQKKDQ. Over residues 236–250 the composition is skewed to low complexity; that stretch reads PGPAGAASQHPPAVG. 2 disordered regions span residues 236–267 and 316–336; these read PGPAGAASQHPPAVGGAPGPGPAGPGGLHAGA and SAFEPYSRTNNKEGAEKKALD. The segment covering 325-336 has biased composition (basic and acidic residues); the sequence is NNKEGAEKKALD.

This sequence belongs to the EMX homeobox family.

The protein localises to the nucleus. Transcription factor that may function in dorsoventral specification of the forebrain. Required for axon guidance and major tract formation in the developing forebrain. May contribute to the differentiation of the neuroretina, pigmented epithelium and optic stalk. This chain is Ventral anterior homeobox 1 (Vax1), found in Rattus norvegicus (Rat).